A 208-amino-acid polypeptide reads, in one-letter code: Putative ribosomal protein uS2-like (208 aa).

It belongs to the universal ribosomal protein uS2 family.

The protein resides in the plastid. It is found in the chloroplast. In Chlamydomonas reinhardtii (Chlamydomonas smithii), this protein is Putative ribosomal protein uS2-like (rps2-2).